We begin with the raw amino-acid sequence, 246 residues long: MTTGDCCHLPGSLCDCSGSPAFSKVVEATGLGPPQYVAQVTSRDGRLLSTVIRALDTPSDGPFCRICHEGANGECLLSPCGCTGTLGAVHKSCLEKWLSSSNTSYCELCHTEFAVEKRPRPLTEWLKDPGPRTEKRTLCCDMVCFLFITPLAAISGWLCLRGAQDHLRLHSQLEAVGLIALTIALFTIYVLWTLVSFRYHCQLYSEWRKTNQKVRLKIREADSPEGPQHSPLAAGLLKKVAEETPV.

The RING-CH-type zinc-finger motif lies at 56-116 (DTPSDGPFCR…ELCHTEFAVE (61 aa)). The interval 56-116 (DTPSDGPFCR…ELCHTEFAVE (61 aa)) is required for inhibition of HIV-1 virus production and VSV G protein expression. Cysteine 64, cysteine 67, cysteine 80, cysteine 82, histidine 90, cysteine 93, cysteine 106, and cysteine 109 together coordinate Zn(2+). Positions 121–246 (PLTEWLKDPG…LKKVAEETPV (126 aa)) are required for interaction with IKBKG. The next 2 membrane-spanning stretches (helical) occupy residues 138–158 (LCCD…SGWL) and 175–195 (AVGL…WTLV).

Interacts with STX6; the interaction promotes MARCHF2-mediated ubiquitination and degradation of CFTR. Interacts with MARCHF3. Interacts with GOPC/CAL; the interaction leads to CFTR ubiquitination and degradation. Interacts with CFTR; the interaction leads to CFTR ubiqtuitination and degradation. Interacts (via PDZ domain) with DLG1 (via PDZ domains); the interaction leads to DLG1 ubiqtuitination and degradation. Interacts with ERGIC3. Interacts with ADRB2. Interacts with IKBKG/NEMO; during the late stages of macrophage viral and bacterial infection; the interaction leads to ubiquitination and degradation of IKBKG/NEMO. In terms of tissue distribution, broadly expressed.

It localises to the endoplasmic reticulum membrane. Its subcellular location is the lysosome membrane. The protein resides in the endosome membrane. It is found in the golgi apparatus membrane. The protein localises to the cytoplasm. It localises to the cell membrane. The enzyme catalyses S-ubiquitinyl-[E2 ubiquitin-conjugating enzyme]-L-cysteine + [acceptor protein]-L-lysine = [E2 ubiquitin-conjugating enzyme]-L-cysteine + N(6)-ubiquitinyl-[acceptor protein]-L-lysine.. It functions in the pathway protein modification; protein ubiquitination. E3 ubiquitin-protein ligase that may mediate ubiquitination of TFRC and CD86, and promote their subsequent endocytosis and sorting to lysosomes via multivesicular bodies. E3 ubiquitin ligases accept ubiquitin from an E2 ubiquitin-conjugating enzyme in the form of a thioester and then directly transfer the ubiquitin to targeted substrates. Together with GOPC/CAL mediates the ubiquitination and lysosomal degradation of CFTR. Ubiquitinates and therefore mediates the degradation of DLG1. Regulates the intracellular trafficking and secretion of alpha1-antitrypsin/SERPINA1 and HP/haptoglobin via ubiquitination and degradation of the cargo receptor ERGIC3. Negatively regulates the antiviral and antibacterial immune response by repression of the NF-kB and type 1 IFN signaling pathways, via MARCHF2-mediated K48-linked polyubiquitination of IKBKG/NEMO, resulting in its proteasomal degradation. May be involved in endosomal trafficking through interaction with STX6. Its function is as follows. (Microbial infection) Positively regulates the degradation of Vesicular stomatitis virus (VSV) G protein via the lysosomal degradation pathway. Represses HIV-1 viral production and may inhibit the translocation of HIV-1 env to the cell surface, resulting in decreased viral cell-cell transmission. The chain is E3 ubiquitin-protein ligase MARCHF2 from Homo sapiens (Human).